The chain runs to 199 residues: Imidazole glycerol phosphate synthase subunit HisH (199 aa).

Residues 1–199 (MTVVVDYEMG…QILKNLREML (199 aa)) form the Glutamine amidotransferase type-1 domain. The active-site Nucleophile is Cys79. Catalysis depends on residues His180 and Glu182.

As to quaternary structure, heterodimer of HisH and HisF.

Its subcellular location is the cytoplasm. The catalysed reaction is 5-[(5-phospho-1-deoxy-D-ribulos-1-ylimino)methylamino]-1-(5-phospho-beta-D-ribosyl)imidazole-4-carboxamide + L-glutamine = D-erythro-1-(imidazol-4-yl)glycerol 3-phosphate + 5-amino-1-(5-phospho-beta-D-ribosyl)imidazole-4-carboxamide + L-glutamate + H(+). The enzyme catalyses L-glutamine + H2O = L-glutamate + NH4(+). The protein operates within amino-acid biosynthesis; L-histidine biosynthesis; L-histidine from 5-phospho-alpha-D-ribose 1-diphosphate: step 5/9. IGPS catalyzes the conversion of PRFAR and glutamine to IGP, AICAR and glutamate. The HisH subunit catalyzes the hydrolysis of glutamine to glutamate and ammonia as part of the synthesis of IGP and AICAR. The resulting ammonia molecule is channeled to the active site of HisF. The sequence is that of Imidazole glycerol phosphate synthase subunit HisH from Carboxydothermus hydrogenoformans (strain ATCC BAA-161 / DSM 6008 / Z-2901).